A 257-amino-acid chain; its full sequence is MRYALGVEYDGSEFQGWQQLGEHGGPSVQASLQAALSSVADAPVQVVCAGRTDAGVHGECQVVHFDSDARREPRGWMLGTTARLPPSIAVRWCVPAADDFHARFSARARRYRYRLLNRQIRPALYRQTLSWERRPLDADAMHGAAQALLGENDFSAFRSVQCQALHARRHLQAIHVQRIGEVVEVQVQANAFLHHMVRNIVGSLILVGTGEQPADWIATLLAGRDRTVAGPTAPPQGLVFIGPLYPAEWHLPAEVTQ.

The active-site Nucleophile is the Asp53. Residue Tyr111 coordinates substrate.

It belongs to the tRNA pseudouridine synthase TruA family. As to quaternary structure, homodimer.

The enzyme catalyses uridine(38/39/40) in tRNA = pseudouridine(38/39/40) in tRNA. In terms of biological role, formation of pseudouridine at positions 38, 39 and 40 in the anticodon stem and loop of transfer RNAs. The protein is tRNA pseudouridine synthase A of Xanthomonas axonopodis pv. citri (strain 306).